We begin with the raw amino-acid sequence, 421 residues long: UDP-N-acetylglucosamine 1-carboxyvinyltransferase (421 aa).

22–23 lines the phosphoenolpyruvate pocket; that stretch reads KN. Residue Arg-94 participates in UDP-N-acetyl-alpha-D-glucosamine binding. Cys-118 functions as the Proton donor in the catalytic mechanism. Cys-118 carries the post-translational modification 2-(S-cysteinyl)pyruvic acid O-phosphothioketal. UDP-N-acetyl-alpha-D-glucosamine-binding positions include 163-166, Asp-308, and Ile-330; that span reads KVSV.

It belongs to the EPSP synthase family. MurA subfamily.

Its subcellular location is the cytoplasm. The enzyme catalyses phosphoenolpyruvate + UDP-N-acetyl-alpha-D-glucosamine = UDP-N-acetyl-3-O-(1-carboxyvinyl)-alpha-D-glucosamine + phosphate. It participates in cell wall biogenesis; peptidoglycan biosynthesis. Functionally, cell wall formation. Adds enolpyruvyl to UDP-N-acetylglucosamine. In Orientia tsutsugamushi (strain Ikeda) (Rickettsia tsutsugamushi), this protein is UDP-N-acetylglucosamine 1-carboxyvinyltransferase.